A 120-amino-acid chain; its full sequence is uncharacterized protein (120 aa).

To B.subtilis XkdH.

This is an uncharacterized protein from Bacillus subtilis (strain 168).